Reading from the N-terminus, the 900-residue chain is Alanine--tRNA ligase (900 aa).

Residues His-567, His-571, Cys-671, and His-675 each contribute to the Zn(2+) site.

It belongs to the class-II aminoacyl-tRNA synthetase family. Requires Zn(2+) as cofactor.

It is found in the cytoplasm. It catalyses the reaction tRNA(Ala) + L-alanine + ATP = L-alanyl-tRNA(Ala) + AMP + diphosphate. Functionally, catalyzes the attachment of alanine to tRNA(Ala) in a two-step reaction: alanine is first activated by ATP to form Ala-AMP and then transferred to the acceptor end of tRNA(Ala). Also edits incorrectly charged Ser-tRNA(Ala) and Gly-tRNA(Ala) via its editing domain. This is Alanine--tRNA ligase from Mycoplasma pneumoniae (strain ATCC 29342 / M129 / Subtype 1) (Mycoplasmoides pneumoniae).